The following is a 322-amino-acid chain: Pyridoxal kinase (322 aa).

Methionine 1 bears the N-acetylmethionine mark. Positions 22 and 57 each coordinate pyridoxal. Threonine 57 is a binding site for pyridoxal 5'-phosphate. Serine 69 carries the phosphoserine modification. An ATP-binding site is contributed by aspartate 123. Aspartate 123 lines the Na(+) pocket. Aspartate 128 serves as a coordination point for Mg(2+). Na(+) is bound at residue threonine 158. An ATP-binding site is contributed by 160 to 163 (NQFE). Serine 174 is subject to Phosphoserine. Threonine 196 provides a ligand contact to Na(+). 196–197 (TS) contributes to the ATP binding site. Serine 223 carries the post-translational modification Phosphoserine. ATP contacts are provided by residues 236-238 (VDA) and threonine 243. 244-245 (GD) provides a ligand contact to pyridoxal 5'-phosphate. The active-site Proton acceptor is the aspartate 245. Residue serine 295 is modified to Phosphoserine.

The protein belongs to the pyridoxine kinase family. As to quaternary structure, homodimer. Zn(2+) serves as cofactor. Mg(2+) is required as a cofactor. The N-terminus is blocked.

Its subcellular location is the cytoplasm. The protein resides in the cytosol. It carries out the reaction pyridoxal + ATP = pyridoxal 5'-phosphate + ADP + H(+). It catalyses the reaction pyridoxamine + ATP = pyridoxamine 5'-phosphate + ADP + H(+). The catalysed reaction is pyridoxine + ATP = pyridoxine 5'-phosphate + ADP + H(+). It participates in cofactor metabolism; pyridoxal 5'-phosphate salvage; pyridoxal 5'-phosphate from pyridoxal: step 1/1. The protein operates within cofactor metabolism; pyridoxal 5'-phosphate salvage; pyridoxine 5'-phosphate from pyridoxine: step 1/1. Its pathway is cofactor metabolism; pyridoxal 5'-phosphate salvage; pyridoxamine 5'-phosphate from pyridoxamine: step 1/1. Its activity is regulated as follows. Activity is increased in the presence of K(+)or Na(+). Functionally, catalyzes the phosphorylation of the dietary vitamin B6 vitamers pyridoxal (PL), pyridoxine (PN) and pyridoxamine (PM) to form pyridoxal 5'-phosphate (PLP), pyridoxine 5'-phosphate (PNP) and pyridoxamine 5'-phosphate (PMP), respectively. PLP is the active form of vitamin B6, and acts as a cofactor for over 140 different enzymatic reactions. This Sus scrofa (Pig) protein is Pyridoxal kinase (PDXK).